A 448-amino-acid chain; its full sequence is Phosphoglucosamine mutase (448 aa).

Serine 100 acts as the Phosphoserine intermediate in catalysis. Mg(2+) contacts are provided by serine 100, aspartate 240, aspartate 242, and aspartate 244. Phosphoserine is present on serine 100.

The protein belongs to the phosphohexose mutase family. Mg(2+) serves as cofactor. Activated by phosphorylation.

It carries out the reaction alpha-D-glucosamine 1-phosphate = D-glucosamine 6-phosphate. Catalyzes the conversion of glucosamine-6-phosphate to glucosamine-1-phosphate. The sequence is that of Phosphoglucosamine mutase from Bacillus cereus (strain ATCC 10987 / NRS 248).